The sequence spans 280 residues: Pantothenate synthetase (280 aa).

31–38 (MGNLHAGH) is an ATP binding site. His38 serves as the catalytic Proton donor. Gln62 contacts (R)-pantoate. Gln62 serves as a coordination point for beta-alanine. 150-153 (GKKD) provides a ligand contact to ATP. A (R)-pantoate-binding site is contributed by Gln156. ATP contacts are provided by residues Val179 and 187–190 (MSSR).

The protein belongs to the pantothenate synthetase family. Homodimer.

The protein localises to the cytoplasm. It catalyses the reaction (R)-pantoate + beta-alanine + ATP = (R)-pantothenate + AMP + diphosphate + H(+). The protein operates within cofactor biosynthesis; (R)-pantothenate biosynthesis; (R)-pantothenate from (R)-pantoate and beta-alanine: step 1/1. Functionally, catalyzes the condensation of pantoate with beta-alanine in an ATP-dependent reaction via a pantoyl-adenylate intermediate. In Xanthomonas axonopodis pv. citri (strain 306), this protein is Pantothenate synthetase.